Consider the following 354-residue polypeptide: Type II secretion system protein K (354 aa).

A propeptide spans 1 to 7 (leader sequence); sequence MSRRQRG. The chain crosses the membrane as a helical span at residues 8-28; the sequence is VALLIVMLMLSLMVTIAASIT. Residues 29-354 are Periplasmic-facing; it reads ERSGKAWQRT…QYGGYRTVNP (326 aa). A disordered region spans residues 114-151; the sequence is NVTPNNASGNNTSGNNNAANGSSGNGNSPQPPKVGTSE. Over residues 118–141 the composition is skewed to low complexity; the sequence is NNASGNNTSGNNNAANGSSGNGNS.

The protein belongs to the GSP K family. Type II secretion is composed of four main components: the outer membrane complex, the inner membrane complex, the cytoplasmic secretion ATPase and the periplasm-spanning pseudopilus. Interacts with core component OutG. In terms of processing, cleaved by prepilin peptidase.

The protein resides in the cell inner membrane. Functionally, component of the type II secretion system required for the energy-dependent secretion of extracellular factors such as proteases and toxins from the periplasm. Plays a role in pseudopilus assembly and seems to control its length. Interacts with the pseudopilus tip complex that is critical for the recognition and binding of secretion substrates. In Dickeya chrysanthemi (Pectobacterium chrysanthemi), this protein is Type II secretion system protein K (outK).